The sequence spans 89 residues: Small ribosomal subunit protein uS15 (89 aa).

The protein belongs to the universal ribosomal protein uS15 family. Part of the 30S ribosomal subunit. Forms a bridge to the 50S subunit in the 70S ribosome, contacting the 23S rRNA.

One of the primary rRNA binding proteins, it binds directly to 16S rRNA where it helps nucleate assembly of the platform of the 30S subunit by binding and bridging several RNA helices of the 16S rRNA. In terms of biological role, forms an intersubunit bridge (bridge B4) with the 23S rRNA of the 50S subunit in the ribosome. The protein is Small ribosomal subunit protein uS15 of Nitratidesulfovibrio vulgaris (strain DP4) (Desulfovibrio vulgaris).